We begin with the raw amino-acid sequence, 498 residues long: MSNENHEELNDQLIVRREKVDTLREEGIDPFGEKFIRSISPEEIETKFADKSKEDLEEAAIEVSVAGRIMTKRVKGKVGFTHIQDRFHQLQIYIRKDAIGEDAYAIFKLADLGDIIGIKGTIFRTNTGELSVKATEFTLLSKSLRPLPDKYHGLKDVEQRYRQRYLDLITNEESQNRFVMRSKILKYTRDYMDNQGFLEVETPVLHTIAGGAAAKPFITHHNALDMELYLRIALELHLKRLIVGGMDKVYEIGRVFRNEGTSTRHNPEFTMLESYAAYEDYEDVMDLVEGLVSTVCKQVNGTTKITYGEYDVDLTPNWRRIHMADAVKEYVGVDFWNVTSDEEAHELAKKHDVAVTEHMTYGHILNEFFETYVEEKLIQPTFVYGHPVEISPLAKKNKEDERFTDRFELFIVGREHANAFSELNDPIDQRERFEAQMKEREQGNDEAHGMDADFLEALEYGLPPTGGLGIGIDRLVMLLTDAPSIRDILLFPTMKHRD.

2 residues coordinate Mg(2+): Glu-408 and Glu-415.

It belongs to the class-II aminoacyl-tRNA synthetase family. In terms of assembly, homodimer. It depends on Mg(2+) as a cofactor.

The protein resides in the cytoplasm. The enzyme catalyses tRNA(Lys) + L-lysine + ATP = L-lysyl-tRNA(Lys) + AMP + diphosphate. In Listeria innocua serovar 6a (strain ATCC BAA-680 / CLIP 11262), this protein is Lysine--tRNA ligase.